The following is a 98-amino-acid chain: Prostate and testis expressed protein 3 (98 aa).

The N-terminal stretch at 1 to 20 is a signal peptide; sequence MNKHFLLLFSLFYFIVEATS. The UPAR/Ly6 domain maps to 21 to 97; that stretch reads LKCVTCHLRT…CCNSDFCNFR (77 aa). Intrachain disulfides connect cysteine 23/cysteine 50, cysteine 26/cysteine 35, cysteine 42/cysteine 68, and cysteine 72/cysteine 88.

The protein belongs to the PATE family.

Its subcellular location is the secreted. This is Prostate and testis expressed protein 3 (Pate3) from Mus musculus (Mouse).